A 674-amino-acid chain; its full sequence is Enzymatic polyprotein (674 aa).

The tract at residues 40 to 130 (IELHCFVDTG…CQLYEPFIQF (91 aa)) is protease. Residue D47 is part of the active site. One can recognise a Reverse transcriptase domain in the interval 267 to 447 (LKVIKPSKSP…KKINFLGLEI (181 aa)).

Belongs to the caulimoviridae enzymatic polyprotein family.

It carries out the reaction DNA(n) + a 2'-deoxyribonucleoside 5'-triphosphate = DNA(n+1) + diphosphate. Functionally, encodes for at least two polypeptides: protease (PR) and reverse transcriptase (RT). The protease processes the polyprotein in cis. Reverse transcriptase is multifunctional enzyme that converts the viral RNA genome into dsDNA in viral cytoplasmic capsids. This enzyme displays a DNA polymerase activity that can copy either DNA or RNA templates, and a ribonuclease H (RNase H) activity that cleaves the RNA strand of RNA-DNA heteroduplexes in a partially processive 3'- to 5'-endonucleasic mode. Neo-synthesized pregenomic RNA (pgRNA) are encapsidated, and reverse-transcribed inside the nucleocapsid. Partial (+)DNA is synthesized from the (-)DNA template and generates the relaxed circular DNA (RC-DNA) genome. After budding and infection, the RC-DNA migrates in the nucleus, and is converted into a plasmid-like covalently closed circular DNA (cccDNA). This chain is Enzymatic polyprotein, found in Arabidopsis thaliana (Mouse-ear cress).